The primary structure comprises 884 residues: Lon protease homolog 2, peroxisomal (884 aa).

Residues 12–255 form the Lon N-terminal domain; it reads LAILPFRNKV…KATELVDRHL (244 aa). Residues 67–101 form a disordered region; sequence SLLSPGVGSDSGEGGSKAPGGSAGESTKQDTKNGK. The span at 75–89 shows a compositional bias: gly residues; the sequence is SDSGEGGSKAPGGSA. ATP is bound at residue 408 to 415; it reads GPPGVGKT. In terms of domain architecture, Lon proteolytic spans 689 to 874; that stretch reads VASPGVSVGL…EEVLDHAFEG (186 aa). Active-site residues include S780 and K823. Positions 882–884 match the Microbody targeting signal motif; that stretch reads SKL.

Belongs to the peptidase S16 family. In terms of tissue distribution, expressed in roots, leaves and panicles.

It is found in the peroxisome matrix. The catalysed reaction is Hydrolysis of proteins in presence of ATP.. In terms of biological role, ATP-dependent serine protease that mediates the selective degradation of misfolded and unassembled polypeptides in the peroxisomal matrix. Necessary for type 2 peroxisome targeting signal (PTS2)-containing protein processing and facilitates peroxisome matrix protein import. This chain is Lon protease homolog 2, peroxisomal (LON1), found in Oryza sativa subsp. indica (Rice).